The following is a 213-amino-acid chain: Uridine kinase (213 aa).

14 to 21 is a binding site for ATP; that stretch reads GASASGKS.

It belongs to the uridine kinase family.

The protein localises to the cytoplasm. It catalyses the reaction uridine + ATP = UMP + ADP + H(+). The enzyme catalyses cytidine + ATP = CMP + ADP + H(+). It functions in the pathway pyrimidine metabolism; CTP biosynthesis via salvage pathway; CTP from cytidine: step 1/3. It participates in pyrimidine metabolism; UMP biosynthesis via salvage pathway; UMP from uridine: step 1/1. The polypeptide is Uridine kinase (Vibrio vulnificus (strain CMCP6)).